The chain runs to 196 residues: MPPPIGYCPAVGFGGRHERSNAELLAAHVAGDRYAFDQLFRRHHRQLHRLARLTSRTSEDADDALQDAMLSAHRGAGSFRYDAAVSSWLHRIVVNACLDRLRRAKAHPTAPLEDVYPVADRTAQVETAIAVQRALMRLPVEQRAAVVAVDMQGYSIADTARMLGVAEGTVKSRCARARARLARLLGYLNTGVNIRR.

The sigma-70 factor domain-2 stretch occupies residues 39 to 105; sequence LFRRHHRQLH…ACLDRLRRAK (67 aa). The Interaction with polymerase core subunit RpoC signature appears at 63–66; it reads DALQ. Residues 130-181 are sigma-70 factor domain-4; the sequence is AVQRALMRLPVEQRAAVVAVDMQGYSIADTARMLGVAEGTVKSRCARARARL. The H-T-H motif DNA-binding region spans 156–175; it reads IADTARMLGVAEGTVKSRCA.

It belongs to the sigma-70 factor family. ECF subfamily. Interacts transiently with the RNA polymerase catalytic core formed by RpoA, RpoB, RpoC and RpoZ (2 alpha, 1 beta, 1 beta' and 1 omega subunit) to form the RNA polymerase holoenzyme that can initiate transcription. Interacts (via sigma-70 factor domain 4) with anti-sigma-M factor RsmA.

In terms of biological role, sigma factors are initiation factors that promote the attachment of RNA polymerase to specific initiation sites and are then released. Extracytoplasmic function (ECF) sigma factors are held in an inactive form by an anti-sigma factor until released by regulated intramembrane proteolysis. The protein is ECF RNA polymerase sigma factor SigM (sigM) of Mycobacterium tuberculosis (strain ATCC 35801 / TMC 107 / Erdman).